Reading from the N-terminus, the 100-residue chain is Large ribosomal subunit protein uL23 (100 aa).

It belongs to the universal ribosomal protein uL23 family. Part of the 50S ribosomal subunit. Contacts protein L29, and trigger factor when it is bound to the ribosome.

In terms of biological role, one of the early assembly proteins it binds 23S rRNA. One of the proteins that surrounds the polypeptide exit tunnel on the outside of the ribosome. Forms the main docking site for trigger factor binding to the ribosome. This is Large ribosomal subunit protein uL23 from Synechococcus sp. (strain CC9605).